The sequence spans 87 residues: Acyl-CoA-binding protein (87 aa).

Position 2 is an N-acetylserine (serine 2). One can recognise an ACB domain in the interval 2-87 (SQAEFDKAAE…VEELKKKYGI (86 aa)). Residue lysine 8 is modified to N6-acetyllysine; alternate. Lysine 8 carries the N6-succinyllysine; alternate modification. Lysine 14 is a binding site for an acyl-CoA. Lysine 17 is modified (N6-succinyllysine). An N6-acetyllysine modification is found at lysine 19. The residue at position 29 (tyrosine 29) is a Phosphotyrosine. An acyl-CoA contacts are provided by residues 29 to 33 (YSHYK), lysine 51, lysine 55, and tyrosine 74. At lysine 51 the chain carries N6-acetyllysine. Lysine 55 carries the post-translational modification N6-acetyllysine; alternate. Lysine 55 is modified (N6-succinyllysine; alternate). N6-(2-hydroxyisobutyryl)lysine; alternate is present on lysine 55. Lysine 55 is subject to N6-malonyllysine; alternate. An N6-acetyllysine; alternate modification is found at lysine 77. At lysine 77 the chain carries N6-succinyllysine; alternate.

It belongs to the ACBP family. As to quaternary structure, monomer.

It is found in the endoplasmic reticulum. It localises to the golgi apparatus. Its function is as follows. Binds medium- and long-chain acyl-CoA esters with very high affinity and may function as an intracellular carrier of acyl-CoA esters. It is also able to displace diazepam from the benzodiazepine (BZD) recognition site located on the GABA type A receptor. It is therefore possible that this protein also acts as a neuropeptide to modulate the action of the GABA receptor. The chain is Acyl-CoA-binding protein (DBI) from Bos taurus (Bovine).